Reading from the N-terminus, the 267-residue chain is Zinc finger protein ZAT1 (267 aa).

A C2H2-type 1 zinc finger spans residues 5 to 27 (HKCKLCWKSFANGRALGGHMRSH). Disordered stretches follow at residues 34–99 (PSQP…ADIK) and 181–204 (SHKKKIAETDQLGSDELKKKKKKS). The span at 52–62 (QDRESETESSK) shows a compositional bias: basic and acidic residues. Positions 63–73 (KPSRKRSRLNR) are enriched in basic residues. Residues 83–97 (QSNEEGKSETARAAD) show a composition bias toward basic and acidic residues. 2 C2H2-type zinc fingers span residues 160 to 182 (FECETCEKVFKSYQALGGHRASH) and 209 to 231 (HECPICAKVFTSGQALGGHKRSH).

It is found in the nucleus. Probable transcription factor that may be involved in stress responses. This chain is Zinc finger protein ZAT1 (ZAT1), found in Arabidopsis thaliana (Mouse-ear cress).